A 374-amino-acid chain; its full sequence is Flap endonuclease 1 (374 aa).

The interval 1–105 (MGVKGLNKLI…GELEKRLLRR (105 aa)) is N-domain. Asp-34 lines the Mg(2+) pocket. 2 residues coordinate DNA: Arg-47 and Arg-71. 5 residues coordinate Mg(2+): Asp-87, Glu-159, Glu-161, Asp-180, and Asp-182. Positions 123 to 254 (DHLKFEKRLV…VTAYKLIKEH (132 aa)) are I-domain. Glu-159 contacts DNA. DNA is bound by residues Gly-232 and Asp-234. Residue Asp-234 participates in Mg(2+) binding. The segment at 339-347 (VQGRLDSFF) is interaction with PCNA. The disordered stretch occupies residues 353–374 (DDGKDKKRKSTAKDTKSKKQKK).

The protein belongs to the XPG/RAD2 endonuclease family. FEN1 subfamily. As to quaternary structure, interacts with PCNA. Three molecules of RAD27 bind to one PCNA trimer with each molecule binding to one PCNA monomer. PCNA stimulates the nuclease activity without altering cleavage specificity. Mg(2+) is required as a cofactor. Phosphorylated. Phosphorylation upon DNA damage induces relocalization to the nuclear plasma.

It is found in the nucleus. The protein localises to the nucleolus. It localises to the nucleoplasm. Its subcellular location is the mitochondrion. Structure-specific nuclease with 5'-flap endonuclease and 5'-3' exonuclease activities involved in DNA replication and repair. During DNA replication, cleaves the 5'-overhanging flap structure that is generated by displacement synthesis when DNA polymerase encounters the 5'-end of a downstream Okazaki fragment. It enters the flap from the 5'-end and then tracks to cleave the flap base, leaving a nick for ligation. Also involved in the long patch base excision repair (LP-BER) pathway, by cleaving within the apurinic/apyrimidinic (AP) site-terminated flap. Acts as a genome stabilization factor that prevents flaps from equilibrating into structures that lead to duplications and deletions. Also possesses 5'-3' exonuclease activity on nicked or gapped double-stranded DNA, and exhibits RNase H activity. Also involved in replication and repair of rDNA and in repairing mitochondrial DNA. The sequence is that of Flap endonuclease 1 from Candida tropicalis (strain ATCC MYA-3404 / T1) (Yeast).